The following is a 469-amino-acid chain: 3-isopropylmalate dehydratase large subunit (469 aa).

Positions 350, 410, and 413 each coordinate [4Fe-4S] cluster.

It belongs to the aconitase/IPM isomerase family. LeuC type 1 subfamily. Heterodimer of LeuC and LeuD. [4Fe-4S] cluster serves as cofactor.

The catalysed reaction is (2R,3S)-3-isopropylmalate = (2S)-2-isopropylmalate. Its pathway is amino-acid biosynthesis; L-leucine biosynthesis; L-leucine from 3-methyl-2-oxobutanoate: step 2/4. Catalyzes the isomerization between 2-isopropylmalate and 3-isopropylmalate, via the formation of 2-isopropylmaleate. The sequence is that of 3-isopropylmalate dehydratase large subunit from Sinorhizobium medicae (strain WSM419) (Ensifer medicae).